The sequence spans 213 residues: Validoxylamine A 7'-phosphate phosphatase (213 aa).

Aspartate 8 acts as the Nucleophile in catalysis. Residues aspartate 8 and aspartate 10 each coordinate a divalent metal cation. Substrate is bound by residues 8 to 10 (DLD), 107 to 108 (TS), and lysine 140. The active-site Proton donor is aspartate 10. An a divalent metal cation-binding site is contributed by aspartate 165.

The protein belongs to the HAD-like hydrolase superfamily. CbbY/CbbZ/Gph/YieH family. Requires Mg(2+) as cofactor. The cofactor is Mn(2+). It depends on Co(2+) as a cofactor.

The enzyme catalyses validoxylamine A 7'-phosphate + H2O = validoxylamine A + phosphate. In terms of biological role, involved in the biosynthesis of the antifungal agent validamycin A. Catalyzes the dephosphorylation of validoxylamine A 7'-phosphate to yield validoxylamine A. VldH is also able to convert trehalose 6-phosphate to trehalose. The protein is Validoxylamine A 7'-phosphate phosphatase of Streptomyces hygroscopicus subsp. limoneus.